Consider the following 41-residue polypeptide: Large ribosomal subunit protein bL36 (41 aa).

It belongs to the bacterial ribosomal protein bL36 family.

The protein is Large ribosomal subunit protein bL36 of Azorhizobium caulinodans (strain ATCC 43989 / DSM 5975 / JCM 20966 / LMG 6465 / NBRC 14845 / NCIMB 13405 / ORS 571).